A 167-amino-acid chain; its full sequence is Putative ripening-related protein 6 (167 aa).

Residues 1-23 (MANAKQLALFAMLVLLLASCAAA) form the signal peptide. Positions 28–57 (KPDPCDGGGGGVDSHLPPGMRRCSSPAVSE) are disordered.

It belongs to the kiwellin family.

The protein localises to the secreted. In Oryza sativa subsp. japonica (Rice), this protein is Putative ripening-related protein 6.